The sequence spans 152 residues: Lipoprotein signal peptidase (152 aa).

The next 2 membrane-spanning stretches (helical) occupy residues 55-75 and 87-107; these read NGRW…LYYL and VALG…IATG. Catalysis depends on residues Asp-111 and Asp-129. Residues 125–145 form a helical membrane-spanning segment; it reads FNVADICVTVGVGLLFLHLVL.

It belongs to the peptidase A8 family.

Its subcellular location is the cell membrane. The enzyme catalyses Release of signal peptides from bacterial membrane prolipoproteins. Hydrolyzes -Xaa-Yaa-Zaa-|-(S,diacylglyceryl)Cys-, in which Xaa is hydrophobic (preferably Leu), and Yaa (Ala or Ser) and Zaa (Gly or Ala) have small, neutral side chains.. It participates in protein modification; lipoprotein biosynthesis (signal peptide cleavage). Functionally, this protein specifically catalyzes the removal of signal peptides from prolipoproteins. In Symbiobacterium thermophilum (strain DSM 24528 / JCM 14929 / IAM 14863 / T), this protein is Lipoprotein signal peptidase.